The chain runs to 317 residues: Putative toluene-4-sulfonate monooxygenase system reductase subunit TsaB2 (317 aa).

The 103-residue stretch at 4 to 106 (DVPVTVAAVR…SAPRNLFEMA (103 aa)) folds into the FAD-binding FR-type domain. Residue 110-220 (RRVLLLAGGI…PGSVRMERFK (111 aa)) participates in NAD(+) binding. The region spanning 232 to 317 (FELVLQRAGL…CGGGRLVLDI (86 aa)) is the 2Fe-2S ferredoxin-type domain. 3 residues coordinate [2Fe-2S] cluster: Cys266, Cys271, and Cys274.

In terms of assembly, monomer. Part of the p-toluenesulfonate methyl-monooxygenase complex TsaBM, comprising the reductase TsaB and the oxygenase TsaM. It depends on FMN as a cofactor.

Involved in the toluene-4-sulfonate degradation pathway. The polypeptide is Putative toluene-4-sulfonate monooxygenase system reductase subunit TsaB2 (tsaB2) (Comamonas testosteroni (Pseudomonas testosteroni)).